A 542-amino-acid polypeptide reads, in one-letter code: ATP synthase subunit alpha (542 aa).

Position 173 to 180 (173 to 180) interacts with ATP; that stretch reads GDRQTGKT. Residues 518–542 form a disordered region; sequence PLVEKKPDEKHTTPVEQEKIVAGEK. Residues 519–542 are compositionally biased toward basic and acidic residues; it reads LVEKKPDEKHTTPVEQEKIVAGEK.

Belongs to the ATPase alpha/beta chains family. In terms of assembly, F-type ATPases have 2 components, CF(1) - the catalytic core - and CF(0) - the membrane proton channel. CF(1) has five subunits: alpha(3), beta(3), gamma(1), delta(1), epsilon(1). CF(0) has three main subunits: a(1), b(2) and c(9-12). The alpha and beta chains form an alternating ring which encloses part of the gamma chain. CF(1) is attached to CF(0) by a central stalk formed by the gamma and epsilon chains, while a peripheral stalk is formed by the delta and b chains.

It localises to the cell membrane. It carries out the reaction ATP + H2O + 4 H(+)(in) = ADP + phosphate + 5 H(+)(out). Functionally, produces ATP from ADP in the presence of a proton gradient across the membrane. The alpha chain is a regulatory subunit. The sequence is that of ATP synthase subunit alpha from Bifidobacterium adolescentis (strain ATCC 15703 / DSM 20083 / NCTC 11814 / E194a).